A 255-amino-acid chain; its full sequence is ATP synthase subunit a (255 aa).

Residues 1-7 (MMFNNII) constitute a propeptide, removed in mature form. The next 6 membrane-spanning stretches (helical) occupy residues 35-55 (FGFY…LITY), 91-111 (YFPF…LGLI), 120-140 (HFIL…ILGF), 147-167 (FFSL…LVLI), 177-197 (VSLG…LVIL), and 208-228 (GIFY…FSGL).

The protein belongs to the ATPase A chain family. F-type ATPases have 2 components, CF(1) - the catalytic core - and CF(0) - the membrane proton channel. CF(1) has five subunits: alpha(3), beta(3), gamma(1), delta(1), epsilon(1). CF(0) has three main subunits: a, b and c.

The protein resides in the mitochondrion inner membrane. Mitochondrial membrane ATP synthase (F(1)F(0) ATP synthase or Complex V) produces ATP from ADP in the presence of a proton gradient across the membrane which is generated by electron transport complexes of the respiratory chain. F-type ATPases consist of two structural domains, F(1) - containing the extramembraneous catalytic core and F(0) - containing the membrane proton channel, linked together by a central stalk and a peripheral stalk. During catalysis, ATP synthesis in the catalytic domain of F(1) is coupled via a rotary mechanism of the central stalk subunits to proton translocation. Key component of the proton channel; it may play a direct role in the translocation of protons across the membrane. The chain is ATP synthase subunit a (ATP6) from Trichophyton rubrum (Athlete's foot fungus).